Reading from the N-terminus, the 156-residue chain is ATP synthase subunit b (156 aa).

Residues 7 to 26 traverse the membrane as a helical segment; sequence ILGQAIAFVLFVWFCMKYVW.

The protein belongs to the ATPase B chain family. F-type ATPases have 2 components, F(1) - the catalytic core - and F(0) - the membrane proton channel. F(1) has five subunits: alpha(3), beta(3), gamma(1), delta(1), epsilon(1). F(0) has three main subunits: a(1), b(2) and c(10-14). The alpha and beta chains form an alternating ring which encloses part of the gamma chain. F(1) is attached to F(0) by a central stalk formed by the gamma and epsilon chains, while a peripheral stalk is formed by the delta and b chains.

It is found in the cell inner membrane. F(1)F(0) ATP synthase produces ATP from ADP in the presence of a proton or sodium gradient. F-type ATPases consist of two structural domains, F(1) containing the extramembraneous catalytic core and F(0) containing the membrane proton channel, linked together by a central stalk and a peripheral stalk. During catalysis, ATP synthesis in the catalytic domain of F(1) is coupled via a rotary mechanism of the central stalk subunits to proton translocation. In terms of biological role, component of the F(0) channel, it forms part of the peripheral stalk, linking F(1) to F(0). The protein is ATP synthase subunit b of Pectobacterium atrosepticum (strain SCRI 1043 / ATCC BAA-672) (Erwinia carotovora subsp. atroseptica).